Consider the following 632-residue polypeptide: 2-hydroxyacyl-CoA lyase 2 (632 aa).

Residues 10 to 30 (AWGFFSSFLLLAFGTLVAALL) traverse the membrane as a helical segment. Glutamate 98 lines the thiamine diphosphate pocket. The interval 470–550 (DFVGTAAYLV…VMALIGNDAG (81 aa)) is thiamine pyrophosphate binding. Residues aspartate 521 and asparagine 547 each contribute to the Mg(2+) site.

Belongs to the TPP enzyme family. Requires Mg(2+) as cofactor. The cofactor is thiamine diphosphate.

It is found in the endoplasmic reticulum membrane. It carries out the reaction 2-hydroxyoctadecanoyl-CoA = heptadecanal + formyl-CoA. The catalysed reaction is (2R)-hydroxyhexadecanoyl-CoA = pentadecanal + formyl-CoA. Its function is as follows. Endoplasmic reticulum 2-OH acyl-CoA lyase involved in the cleavage (C1 removal) reaction in the fatty acid alpha-oxydation in a thiamine pyrophosphate (TPP)-dependent manner. Involved in the phytosphingosine degradation pathway. This is 2-hydroxyacyl-CoA lyase 2 (ILVBL) from Bos taurus (Bovine).